Here is a 614-residue protein sequence, read N- to C-terminus: Nuclear receptor subfamily 1 group D member 1 (614 aa).

The span at Met-1–Gly-12 shows a compositional bias: polar residues. The segment at Met-1–Ser-70 is required for phosphorylation by CSNK1E and cytoplasmic localization. A disordered region spans residues Met-1–Thr-119. A modulating region spans residues Met-1–Met-128. The segment covering Ile-14–Ser-34 has biased composition (low complexity). Over residues Asp-35 to Cys-48 the composition is skewed to polar residues. Positions Pro-49–Thr-284 are crucial for activation of GJA1. Ser-55 and Ser-59 each carry phosphoserine; by GSK3-beta. Residues Gly-69–Ser-102 show a composition bias toward low complexity. Positions Val-129–Phe-205 form a DNA-binding region, nuclear receptor. 2 NR C4-type zinc fingers span residues Cys-132–Cys-152 and Cys-169–Cys-193. 2 positions are modified to N6-acetyllysine; by KAT5: Lys-191 and Lys-192. Residues Ser-233–Gln-243 show a composition bias toward polar residues. Disordered regions lie at residues Ser-233–Val-285 and Pro-311–Thr-345. Residues His-244 to Ser-261 are compositionally biased toward pro residues. Residue Thr-274 is modified to Phosphothreonine; by CDK1. An NR LBD domain is found at Thr-284–Gln-614. Polar residues predominate over residues Pro-311–Pro-324. Lys-400 is modified (N6-acetyllysine). A heme-binding site is contributed by Cys-418. Lys-591 bears the N6-acetyllysine mark. Residue His-602 participates in heme binding.

This sequence belongs to the nuclear hormone receptor family. NR1 subfamily. In terms of assembly, binds DNA as a monomer or a homodimer. Interacts with C1D, NR2E3 and SP1. Interacts with OPHN1 (via C-terminus). Interacts with ZNHIT1. Interacts with PER2; the interaction associates PER2 to BMAL1 promoter region. Interacts with CRY1. Interacts with CCAR2. Interacts with SIAH2. Interacts with CDK1. Interacts with FBXW7. Interacts with HUWE1. Interacts with NR0B2. Interacts with NFIL3. Interacts (via domain NR LBD) with HSP90AA1 and HSP90AB1. In terms of processing, ubiquitinated, leading to its proteasomal degradation. Ubiquitinated by SIAH2; leading to its proteasomal degradation. Ubiquitinated by the SCF(FBXW7) complex when phosphorylated by CDK1 leading to its proteasomal degradation. Rapidly ubiquitinated in response to inflammatory triggers and sumoylation is a prerequisite to its ubiquitination. Post-translationally, sumoylated by UBE2I, desumoylated by SENP1, and sumoylation is a prerequisite to its ubiquitination. Phosphorylated by CSNK1E; phosphorylation enhances its cytoplasmic localization. In terms of processing, undergoes lysosome-mediated degradation in a time-dependent manner in the liver. In terms of tissue distribution, widely expressed. Expressed at high levels in the liver, adipose tissue, skeletal muscle and brain. Also expressed in endothelial cells (ECs), vascular smooth muscle cells (VSMCs) and macrophages. Expression oscillates diurnally in the suprachiasmatic nucleus (SCN) of the hypothalamus as well as in peripheral tissues. Expression increases during the differentiation of pre-adipocytes into mature adipocytes. Expressed at high levels in some squamous carcinoma cell lines.

The protein resides in the nucleus. The protein localises to the cytoplasm. Its subcellular location is the cell projection. It localises to the dendrite. It is found in the dendritic spine. Transcriptional repressor which coordinates circadian rhythm and metabolic pathways in a heme-dependent manner. Integral component of the complex transcription machinery that governs circadian rhythmicity and forms a critical negative limb of the circadian clock by directly repressing the expression of core clock components BMAL1, CLOCK and CRY1. Also regulates genes involved in metabolic functions, including lipid and bile acid metabolism, adipogenesis, gluconeogenesis and the macrophage inflammatory response. Acts as a receptor for heme which stimulates its interaction with the NCOR1/HDAC3 corepressor complex, enhancing transcriptional repression. Recognizes two classes of DNA response elements within the promoter of its target genes and can bind to DNA as either monomers or homodimers, depending on the nature of the response element. Binds as a monomer to a response element composed of the consensus half-site motif 5'-[A/G]GGTCA-3' preceded by an A/T-rich 5' sequence (RevRE), or as a homodimer to a direct repeat of the core motif spaced by two nucleotides (RevDR-2). Acts as a potent competitive repressor of ROR alpha (RORA) function and regulates the levels of its ligand heme by repressing the expression of PPARGC1A, a potent inducer of heme synthesis. Regulates lipid metabolism by repressing the expression of APOC3 and by influencing the activity of sterol response element binding proteins (SREBPs); represses INSIG2 which interferes with the proteolytic activation of SREBPs which in turn govern the rhythmic expression of enzymes with key functions in sterol and fatty acid synthesis. Regulates gluconeogenesis via repression of G6PC1 and PEPCK and adipocyte differentiation via repression of PPARG. Regulates glucagon release in pancreatic alpha-cells via the AMPK-NAMPT-SIRT1 pathway and the proliferation, glucose-induced insulin secretion and expression of key lipogenic genes in pancreatic-beta cells. Positively regulates bile acid synthesis by increasing hepatic expression of CYP7A1 via repression of NR0B2 and NFIL3 which are negative regulators of CYP7A1. Modulates skeletal muscle oxidative capacity by regulating mitochondrial biogenesis and autophagy; controls mitochondrial biogenesis and respiration by interfering with the STK11-PRKAA1/2-SIRT1-PPARGC1A signaling pathway. Represses the expression of SERPINE1/PAI1, an important modulator of cardiovascular disease and the expression of inflammatory cytokines and chemokines in macrophages. Represses gene expression at a distance in macrophages by inhibiting the transcription of enhancer-derived RNAs (eRNAs). Plays a role in the circadian regulation of body temperature and negatively regulates thermogenic transcriptional programs in brown adipose tissue (BAT); imposes a circadian oscillation in BAT activity, increasing body temperature when awake and depressing thermogenesis during sleep. In concert with NR2E3, regulates transcriptional networks critical for photoreceptor development and function. In addition to its activity as a repressor, can also act as a transcriptional activator. In the ovarian granulosa cells acts as a transcriptional activator of STAR which plays a role in steroid biosynthesis. In collaboration with SP1, activates GJA1 transcription in a heme-independent manner. Represses the transcription of CYP2B10, CYP4A10 and CYP4A14. Represses the transcription of CES2. Represses and regulates the circadian expression of TSHB in a NCOR1-dependent manner. Negatively regulates the protein stability of NR3C1 and influences the time-dependent subcellular distribution of NR3C1, thereby affecting its transcriptional regulatory activity. Plays a critical role in the circadian control of neutrophilic inflammation in the lung; under resting, non-stress conditions, acts as a rhythmic repressor to limit inflammatory activity whereas in the presence of inflammatory triggers undergoes ubiquitin-mediated degradation thereby relieving inhibition of the inflammatory response. Plays a key role in the circadian regulation of microglial activation and neuroinflammation; suppresses microglial activation through the NF-kappaB pathway in the central nervous system. Plays a role in the regulation of the diurnal rhythms of lipid and protein metabolism in the skeletal muscle via transcriptional repression of genes controlling lipid and amino acid metabolism in the muscle. The chain is Nuclear receptor subfamily 1 group D member 1 (NR1D1) from Homo sapiens (Human).